Here is a 130-residue protein sequence, read N- to C-terminus: MTGNDPFTNALAGMDNAESVGHLSYTVEPASNIIGSVLEVLYDRGYVDGFEYVDDGKAGKFEVELKGAINECGAVKPRYSAGADEFEKWEKRYLPARDYGTLIVTTSHGVMSHYEAREEGIGGQVIAYVY.

Belongs to the universal ribosomal protein uS8 family. In terms of assembly, part of the 30S ribosomal subunit.

One of the primary rRNA binding proteins, it binds directly to 16S rRNA central domain where it helps coordinate assembly of the platform of the 30S subunit. This is Small ribosomal subunit protein uS8 from Halorubrum lacusprofundi (strain ATCC 49239 / DSM 5036 / JCM 8891 / ACAM 34).